A 61-amino-acid polypeptide reads, in one-letter code: uncharacterized protein (61 aa).

This is an uncharacterized protein from Archaeoglobus fulgidus (strain ATCC 49558 / DSM 4304 / JCM 9628 / NBRC 100126 / VC-16).